The chain runs to 565 residues: O-fucosyltransferase 7 (565 aa).

Residues 17–37 (VLIWAICVMTLLCFLTVHIYV) traverse the membrane as a helical; Signal-anchor for type II membrane protein segment. Residues N62, N73, N104, N124, and N190 are each glycosylated (N-linked (GlcNAc...) asparagine). Residue 327 to 329 (HLR) participates in substrate binding. A glycan (N-linked (GlcNAc...) asparagine) is linked at N441. Positions 515-565 (NEIHKTRQGSPRRRKGPASGTKGLERHRSEESFYENPLPDCLCQRDPSKAR) are disordered. Residues 520 to 530 (TRQGSPRRRKG) are compositionally biased toward basic residues.

Belongs to the glycosyltransferase GT106 family.

It localises to the membrane. It functions in the pathway glycan metabolism. This is O-fucosyltransferase 7 from Arabidopsis thaliana (Mouse-ear cress).